Here is a 214-residue protein sequence, read N- to C-terminus: Redox-sensing transcriptional repressor Rex (214 aa).

Residues 17–56 (LYYRIFKRFHADQVEKASSKQIADAMGIDSATVRRDFSYF) constitute a DNA-binding region (H-T-H motif). Residue 91–96 (GCGNIG) participates in NAD(+) binding.

Belongs to the transcriptional regulatory Rex family. Homodimer.

The protein resides in the cytoplasm. Modulates transcription in response to changes in cellular NADH/NAD(+) redox state. The sequence is that of Redox-sensing transcriptional repressor Rex from Streptococcus pyogenes serotype M1.